A 258-amino-acid chain; its full sequence is Ferredoxin--NADP reductase (258 aa).

The 101-residue stretch at Ser2 to Asp102 folds into the FAD-binding FR-type domain. Residues Arg51, Ala52, Tyr53, Ser54, Phe67, Ile69, Leu76, Thr77, and Thr117 each contribute to the FAD site. NADP(+) is bound by residues Val144, Arg145, Thr181, Arg182, Arg190, Ser223, Glu227, Phe255, and Glu257. FAD contacts are provided by Phe255, Glu257, and Lys258.

The protein belongs to the ferredoxin--NADP reductase type 1 family. Monomer. The cofactor is FAD.

The catalysed reaction is 2 reduced [2Fe-2S]-[ferredoxin] + NADP(+) + H(+) = 2 oxidized [2Fe-2S]-[ferredoxin] + NADPH. Transports electrons between ferredoxin and NADPH. Provides electrons to heme oxygenase (pigA) allowing anaerobic heme degradation. Provides electrons necessary to reduce and mobilize Fe(3+) in a heterooligomeric bacterioferritin (BFR) complex to Fe(2+). Reduction of Fe(3+) in a pure FtnA BFR does not require Bfd. Reduction of Fe(3+) in a pure BfrB BFR does require Bfd. This Pseudomonas aeruginosa (strain ATCC 15692 / DSM 22644 / CIP 104116 / JCM 14847 / LMG 12228 / 1C / PRS 101 / PAO1) protein is Ferredoxin--NADP reductase.